Consider the following 282-residue polypeptide: Purine nucleoside phosphorylase (282 aa).

Residues S46, H78, and 103 to 105 (RTH) each bind phosphate. The active site involves E204. E204 is an a purine D-ribonucleoside binding site. Position 223 (S223) interacts with phosphate. N246 is an a purine D-ribonucleoside binding site.

This sequence belongs to the PNP/MTAP phosphorylase family. In terms of assembly, homotrimer.

It catalyses the reaction a purine 2'-deoxy-D-ribonucleoside + phosphate = a purine nucleobase + 2-deoxy-alpha-D-ribose 1-phosphate. The protein operates within purine metabolism; purine nucleoside salvage. Its function is as follows. The purine nucleoside phosphorylases catalyze the phosphorolytic breakdown of the N-glycosidic bond in the beta-(deoxy)ribonucleoside molecules, with the formation of the corresponding free purine bases and pentose-1-phosphate. Cleaves guanosine, inosine, 2'-deoxyguanosine and 2'-deoxyinosine. The polypeptide is Purine nucleoside phosphorylase (punA) (Cellulomonas sp).